We begin with the raw amino-acid sequence, 84 residues long: MNSLLMITTCLILIGTVLAEDGYLFDKRKRCTLECIDKTGDKNCDRNCKNEGGSFGKCSYFACWCKGLPGITPISRTPGKTCKI.

Positions 1–19 (MNSLLMITTCLILIGTVLA) are cleaved as a signal peptide. An LCN-type CS-alpha/beta domain is found at 20 to 83 (EDGYLFDKRK…ISRTPGKTCK (64 aa)). Intrachain disulfides connect cysteine 31–cysteine 82, cysteine 35–cysteine 58, cysteine 44–cysteine 63, and cysteine 48–cysteine 65.

This sequence belongs to the long (4 C-C) scorpion toxin superfamily. Sodium channel inhibitor family. Beta subfamily. As to expression, expressed by the venom gland.

The protein resides in the secreted. Its function is as follows. Beta toxins bind voltage-independently at site-4 of sodium channels (Nav) and shift the voltage of activation toward more negative potentials thereby affecting sodium channel activation and promoting spontaneous and repetitive firing. This Centruroides sculpturatus (Arizona bark scorpion) protein is Toxin CsE9.